A 429-amino-acid chain; its full sequence is Histidine--tRNA ligase (429 aa).

This sequence belongs to the class-II aminoacyl-tRNA synthetase family. Homodimer.

It localises to the cytoplasm. The catalysed reaction is tRNA(His) + L-histidine + ATP = L-histidyl-tRNA(His) + AMP + diphosphate + H(+). The sequence is that of Histidine--tRNA ligase from Pseudomonas fluorescens (strain Pf0-1).